The primary structure comprises 379 residues: RIB43A-like with coiled-coils protein 1 (379 aa).

Positions methionine 1–asparagine 21 are disordered. The segment covering aspartate 9–asparagine 21 has biased composition (basic and acidic residues). Coiled-coil stretches lie at residues alanine 85–phenylalanine 111, arginine 161–leucine 241, and glutamate 280–lysine 304.

The protein belongs to the RIB43A family. As to quaternary structure, microtubule inner protein component of sperm flagellar doublet microtubules.

The protein localises to the cytoplasm. The protein resides in the cytoskeleton. It is found in the flagellum axoneme. The chain is RIB43A-like with coiled-coils protein 1 (RIBC1) from Macaca fascicularis (Crab-eating macaque).